We begin with the raw amino-acid sequence, 284 residues long: Nucleotide-binding protein NMA0948 (284 aa).

Position 8–15 (8–15) interacts with ATP; sequence GLSGSGKS. 58-61 is a GTP binding site; it reads DVRS.

It belongs to the RapZ-like family.

Functionally, displays ATPase and GTPase activities. This is Nucleotide-binding protein NMA0948 from Neisseria meningitidis serogroup A / serotype 4A (strain DSM 15465 / Z2491).